Reading from the N-terminus, the 162-residue chain is D-aminoacyl-tRNA deacylase (162 aa).

A Gly-cisPro motif, important for rejection of L-amino acids motif is present at residues 143–144; sequence GP.

This sequence belongs to the DTD family. In terms of assembly, homodimer.

It localises to the cytoplasm. The catalysed reaction is glycyl-tRNA(Ala) + H2O = tRNA(Ala) + glycine + H(+). The enzyme catalyses a D-aminoacyl-tRNA + H2O = a tRNA + a D-alpha-amino acid + H(+). Its function is as follows. An aminoacyl-tRNA editing enzyme that deacylates mischarged D-aminoacyl-tRNAs. Also deacylates mischarged glycyl-tRNA(Ala), protecting cells against glycine mischarging by AlaRS. Acts via tRNA-based rather than protein-based catalysis; rejects L-amino acids rather than detecting D-amino acids in the active site. By recycling D-aminoacyl-tRNA to D-amino acids and free tRNA molecules, this enzyme counteracts the toxicity associated with the formation of D-aminoacyl-tRNA entities in vivo and helps enforce protein L-homochirality. The polypeptide is D-aminoacyl-tRNA deacylase (Nitratidesulfovibrio vulgaris (strain ATCC 29579 / DSM 644 / CCUG 34227 / NCIMB 8303 / VKM B-1760 / Hildenborough) (Desulfovibrio vulgaris)).